The chain runs to 196 residues: Protein hunchback (196 aa).

Disordered stretches follow at residues 16-60 (SHHH…NTNL) and 90-196 (AMTP…KYMA). Residues 17 to 30 (HHHHHHHAHHSYHQ) show a composition bias toward basic residues. The span at 92–103 (TPSSSNNDQNSP) shows a compositional bias: polar residues. A compositionally biased stretch (low complexity) spans 125-144 (PTATTTTTPAAAAPTTTAAT). Residues 176–196 (AEREKEHDLMSNSSEDMKYMA) show a composition bias toward basic and acidic residues.

It belongs to the hunchback C2H2-type zinc-finger protein family.

It localises to the nucleus. Functionally, gap class segmentation protein that controls development of head structures. This is Protein hunchback (hb) from Drosophila silvestris (Fruit fly).